A 288-amino-acid polypeptide reads, in one-letter code: Cyclic UMP-AMP synthase (288 aa).

Positions M1–T23 are disordered. A UTP-binding site is contributed by Q46. Q46–S48 lines the ATP pocket. 2 residues coordinate Mg(2+): D60 and D62. Residues D62 and R116–K120 each bind UTP. D129 is a Mg(2+) binding site. UTP is bound at residue N166. Positions 194, 212, and 265 each coordinate ATP.

Belongs to the CD-NTase family. E01 subfamily. Mg(2+) is required as a cofactor.

It catalyses the reaction UTP + ATP = 3',3'-cUAMP + 2 diphosphate. Cyclic nucleotide synthase (second messenger synthase) of a CBASS antivirus system. CBASS (cyclic oligonucleotide-based antiphage signaling system) provides immunity against bacteriophage. The CD-NTase protein synthesizes cyclic nucleotides in response to infection; these serve as specific second messenger signals. The signals activate a diverse range of effectors, leading to bacterial cell death and thus abortive phage infection. A type I-B(UU) CBASS system. Functionally, cyclic dinucleotide synthase that catalyzes the synthesis of 3'3'-cyclic UMP-AMP (cUMP-AMP) from UTP and ATP, a second messenger for cell signal transduction. The sequence is that of Cyclic UMP-AMP synthase from Rhodothermus marinus (strain SG0.5JP17-172).